Here is a 259-residue protein sequence, read N- to C-terminus: Cell division protein FtsQ (259 aa).

Over 1 to 15 (MTRDQTATFGRHALR) the chain is Cytoplasmic. The chain crosses the membrane as a helical span at residues 16–36 (VAGSGLLVAGVVALGLLGWQW). Topologically, residues 37–259 (RANVTVDRVA…VVTRTRPLDG (223 aa)) are periplasmic. The 70-residue stretch at 40–109 (VTVDRVAVTG…GALTISVTER (70 aa)) folds into the POTRA domain.

This sequence belongs to the FtsQ/DivIB family. FtsQ subfamily.

The protein resides in the cell inner membrane. Essential cell division protein. The chain is Cell division protein FtsQ from Salinibacter ruber (strain DSM 13855 / M31).